The chain runs to 124 residues: Chemotaxis protein CheY1 (124 aa).

The 119-residue stretch at 2 to 120 folds into the Response regulatory domain; that stretch reads KLLVVDDSST…VLKEKLEVVL (119 aa). Mg(2+) is bound by residues Asp7, Asp8, Asp53, and Asn55. Residue Asp53 is modified to 4-aspartylphosphate.

In terms of assembly, interacts (when phosphorylated) with FliM. Mg(2+) is required as a cofactor. Phosphorylated by CheAY. Dephosphorylated (inactivated) by CheZ.

It localises to the cytoplasm. Its function is as follows. Chemotactic response regulator protein that modulates the rotation direction of bacterial flagellar motors. Plays an important role in the colonization and infection of Helicobacter pylori. Upon phosphorylation by CheA, interacts with the flagellar motor protein FliM to cause clockwise flagellar rotation and bacterial reversals, as opposed to straight swimming when CheY1 is not phosphorylated. The sequence is that of Chemotaxis protein CheY1 (cheY1) from Helicobacter pylori (strain J99 / ATCC 700824) (Campylobacter pylori J99).